Reading from the N-terminus, the 224-residue chain is tRNA (guanine-N(7)-)-methyltransferase (224 aa).

The S-adenosyl-L-methionine site is built by Glu-57, Asp-82, and Asp-109. Asp-167 contacts substrate.

This sequence belongs to the class I-like SAM-binding methyltransferase superfamily. TrmB family.

It carries out the reaction guanosine(46) in tRNA + S-adenosyl-L-methionine = N(7)-methylguanosine(46) in tRNA + S-adenosyl-L-homocysteine. Its pathway is tRNA modification; N(7)-methylguanine-tRNA biosynthesis. In terms of biological role, catalyzes the formation of N(7)-methylguanine at position 46 (m7G46) in tRNA. This chain is tRNA (guanine-N(7)-)-methyltransferase, found in Chloroflexus aggregans (strain MD-66 / DSM 9485).